An 851-amino-acid polypeptide reads, in one-letter code: DNA mismatch repair protein MutS (851 aa).

602–609 (GPNMSGKS) serves as a coordination point for ATP.

The protein belongs to the DNA mismatch repair MutS family.

Functionally, this protein is involved in the repair of mismatches in DNA. It is possible that it carries out the mismatch recognition step. This protein has a weak ATPase activity. The polypeptide is DNA mismatch repair protein MutS (Streptococcus pyogenes serotype M3 (strain SSI-1)).